Reading from the N-terminus, the 143-residue chain is Large ribosomal subunit protein uL11 (143 aa).

It belongs to the universal ribosomal protein uL11 family. Part of the ribosomal stalk of the 50S ribosomal subunit. Interacts with L10 and the large rRNA to form the base of the stalk. L10 forms an elongated spine to which L12 dimers bind in a sequential fashion forming a multimeric L10(L12)X complex. One or more lysine residues are methylated.

Its function is as follows. Forms part of the ribosomal stalk which helps the ribosome interact with GTP-bound translation factors. This chain is Large ribosomal subunit protein uL11, found in Salinispora tropica (strain ATCC BAA-916 / DSM 44818 / JCM 13857 / NBRC 105044 / CNB-440).